Reading from the N-terminus, the 416-residue chain is 3-oxoacyl-[acyl-carrier-protein] synthase 2 (416 aa).

A Ketosynthase family 3 (KS3) domain is found at 6-414 (KKRVVVTGLG…GHNVTLAFKK (409 aa)). Residues cysteine 167, histidine 307, and histidine 344 each act as for beta-ketoacyl synthase activity in the active site.

It belongs to the thiolase-like superfamily. Beta-ketoacyl-ACP synthases family. In terms of assembly, homodimer.

The enzyme catalyses a fatty acyl-[ACP] + malonyl-[ACP] + H(+) = a 3-oxoacyl-[ACP] + holo-[ACP] + CO2. It carries out the reaction (9Z)-hexadecenoyl-[ACP] + malonyl-[ACP] + H(+) = 3-oxo-(11Z)-octadecenoyl-[ACP] + holo-[ACP] + CO2. The protein operates within lipid metabolism; fatty acid biosynthesis. Functionally, involved in the type II fatty acid elongation cycle. Catalyzes the elongation of a wide range of acyl-ACP by the addition of two carbons from malonyl-ACP to an acyl acceptor. Can efficiently catalyze the conversion of palmitoleoyl-ACP (cis-hexadec-9-enoyl-ACP) to cis-vaccenoyl-ACP (cis-octadec-11-enoyl-ACP), an essential step in the thermal regulation of fatty acid composition. The chain is 3-oxoacyl-[acyl-carrier-protein] synthase 2 (fabF) from Synechocystis sp. (strain ATCC 27184 / PCC 6803 / Kazusa).